We begin with the raw amino-acid sequence, 274 residues long: Small ribosomal subunit protein uS2 (274 aa).

Residues 255 to 274 (AEAESEDKGEVLYSFDDEEE) form a disordered region.

It belongs to the universal ribosomal protein uS2 family.

The polypeptide is Small ribosomal subunit protein uS2 (Gloeobacter violaceus (strain ATCC 29082 / PCC 7421)).